A 340-amino-acid chain; its full sequence is MTVSSSIVPPGGLVLVTGVTGFIGSYIANGLLELGYRVRGTVRSSEKATWVTKALTKRNPSANFEAVIVPDQNAPGVWEAVLKDVDGIAHVAGDVSFGPDPTKVITPSVEALRRLLEAAKKEPSVKRFVFTSSDQAASNRSTTREILINEDTWNEEAIEAAWRPPPYEAERGWDVYSALKAQVEKEMWRFSREEKPSFVVNSVLPTYTIGAIFDEQQAGSTAKWLLDFYKDPSKDGFMRGFGSSYYVYVGDVALLHIGALTLEEVQNKRLLAFAGRFNFNSWLEVFRKHDPSKPWPEDDPTQALDTRRVNGETELYILKQFGKDGWTSFEDSALKVLESP.

The helical transmembrane segment at 7-27 (IVPPGGLVLVTGVTGFIGSYI) threads the bilayer. Asparagine 139 carries an N-linked (GlcNAc...) asparagine glycan. Tyrosine 176 is a binding site for NADP(+).

The protein belongs to the NAD(P)-dependent epimerase/dehydratase family. Dihydroflavonol-4-reductase subfamily.

The protein localises to the membrane. Functionally, NAD-dependent epimerase/dehydratase; part of the gene cluster that mediates the biosynthesis of terrein, a fungal metabolite with ecological, antimicrobial, antiproliferative, and antioxidative activities. The first step in the pathway is performed by the polyketide synthase terA that produces 4-hydroxy-6-methylpyranon (4-HMP), orsellinic acid (OA), and 2,3-dehydro-6-hydroxymellein (2,3-dehydro-6-HM) by condensing acetyl-CoA with two, three, or four malonyl-CoA units, respectively. 4-HMP and OA are not pathway intermediates, but are rather shunt or side products. 2,3-dehydro-6-HM is further converted to 6-hydroxymellein (6-HM) by the 6-hydroxymellein synthase terB. The monooxygenases terC and terD, the multicopper oxidase terE and the Kelch-like protein terF are then involved in the transformation of 6-HM to terrein. Even if they are co-regulated with the other terrein cluster genes, terH and terI seem to be dispensable for terrein production; whereas one or both of the 2 transporters terG and terJ are probably required for efficient secretion of metabolites. This Aspergillus terreus (strain NIH 2624 / FGSC A1156) protein is NAD-dependent epimerase/dehydratase terH.